A 70-amino-acid chain; its full sequence is Small ribosomal subunit protein bS21 (70 aa).

It belongs to the bacterial ribosomal protein bS21 family.

This Methylibium petroleiphilum (strain ATCC BAA-1232 / LMG 22953 / PM1) protein is Small ribosomal subunit protein bS21.